Here is a 351-residue protein sequence, read N- to C-terminus: S-adenosylmethionine:tRNA ribosyltransferase-isomerase (351 aa).

It belongs to the QueA family. In terms of assembly, monomer.

The protein resides in the cytoplasm. It carries out the reaction 7-aminomethyl-7-carbaguanosine(34) in tRNA + S-adenosyl-L-methionine = epoxyqueuosine(34) in tRNA + adenine + L-methionine + 2 H(+). The protein operates within tRNA modification; tRNA-queuosine biosynthesis. In terms of biological role, transfers and isomerizes the ribose moiety from AdoMet to the 7-aminomethyl group of 7-deazaguanine (preQ1-tRNA) to give epoxyqueuosine (oQ-tRNA). This is S-adenosylmethionine:tRNA ribosyltransferase-isomerase from Idiomarina loihiensis (strain ATCC BAA-735 / DSM 15497 / L2-TR).